Here is a 194-residue protein sequence, read N- to C-terminus: Probable proteasome subunit beta type-4 (194 aa).

The protein belongs to the peptidase T1B family. As to quaternary structure, the 26S proteasome consists of a 20S proteasome core and two 19S regulatory subunits. The 20S proteasome core is composed of 28 subunits that are arranged in four stacked rings, resulting in a barrel-shaped structure. The two end rings are each formed by seven alpha subunits, and the two central rings are each formed by seven beta subunits. The catalytic chamber with the active sites is on the inside of the barrel.

It localises to the cytoplasm. It is found in the nucleus. Its function is as follows. Non-catalytic component of the proteasome, a multicatalytic proteinase complex which is characterized by its ability to cleave peptides with Arg, Phe, Tyr, Leu, and Glu adjacent to the leaving group at neutral or slightly basic pH. The proteasome has an ATP-dependent proteolytic activity. The sequence is that of Probable proteasome subunit beta type-4 from Schizosaccharomyces pombe (strain 972 / ATCC 24843) (Fission yeast).